The sequence spans 151 residues: Guanylate kinase homolog (151 aa).

The 141-residue stretch at Met-1–Gln-141 folds into the Guanylate kinase-like domain.

It belongs to the guanylate kinase family.

This chain is Guanylate kinase homolog, found in Bos taurus (Bovine).